The following is an 827-amino-acid chain: Periplasmic nitrate reductase (827 aa).

The tat-type signal signal peptide spans 1–32 (MELNRRDFMKANAAAAAALAAGITLPVKNVYA). In terms of domain architecture, 4Fe-4S Mo/W bis-MGD-type spans 37–93 (IKWDKAPCRFCGTGCSVLVGTQNGRMVASQGDPDAEVNRGLNCIKGYFLPKIIYGKD). The [4Fe-4S] cluster site is built by cysteine 44, cysteine 47, cysteine 51, and cysteine 79. Mo-bis(molybdopterin guanine dinucleotide)-binding positions include lysine 81, glutamine 148, asparagine 173, cysteine 177, 210-217 (WGSNMAEM), 241-245 (STFEH), methionine 371, glutamine 375, asparagine 481, 507-508 (SD), lysine 530, aspartate 557, and 717-726 (TGRVLEHWHS). Phenylalanine 793 serves as a coordination point for substrate. 2 residues coordinate Mo-bis(molybdopterin guanine dinucleotide): asparagine 801 and lysine 818.

Belongs to the prokaryotic molybdopterin-containing oxidoreductase family. NasA/NapA/NarB subfamily. Component of the periplasmic nitrate reductase NapAB complex composed of NapA and NapB. [4Fe-4S] cluster is required as a cofactor. Requires Mo-bis(molybdopterin guanine dinucleotide) as cofactor. Post-translationally, predicted to be exported by the Tat system. The position of the signal peptide cleavage has not been experimentally proven.

It localises to the periplasm. The catalysed reaction is 2 Fe(II)-[cytochrome] + nitrate + 2 H(+) = 2 Fe(III)-[cytochrome] + nitrite + H2O. Catalytic subunit of the periplasmic nitrate reductase complex NapAB. Receives electrons from NapB and catalyzes the reduction of nitrate to nitrite. This Glaesserella parasuis serovar 5 (strain SH0165) (Haemophilus parasuis) protein is Periplasmic nitrate reductase.